The following is a 28-amino-acid chain: Ranatuerin-2LTa (28 aa).

The cysteines at positions 23 and 28 are disulfide-linked.

As to expression, expressed by the skin glands.

The protein resides in the secreted. In terms of biological role, has antibacterial activity. The polypeptide is Ranatuerin-2LTa (Rana latastei (Italian agile frog)).